The primary structure comprises 580 residues: Isochorismate synthase, chloroplastic (580 aa).

The transit peptide at 1–91 (MASITGHCVA…LAMERLSSAV (91 aa)) directs the protein to the chloroplast.

It belongs to the isochorismate synthase family. It depends on Mg(2+) as a cofactor.

The protein localises to the plastid. The protein resides in the chloroplast. It carries out the reaction chorismate = isochorismate. Its activity is regulated as follows. Not inhibited by Tyr, Phe or Trp. Involved in the synthesis of o-succinylbenzoic acid, 2,3-dihydroxybenzoic acid and salicylic acid (SA). The protein is Isochorismate synthase, chloroplastic of Catharanthus roseus (Madagascar periwinkle).